We begin with the raw amino-acid sequence, 677 residues long: WD repeat-containing protein 48 (677 aa).

Tyr-28 bears the Phosphotyrosine mark. 8 WD repeats span residues 28–67 (YNRN…QDPY), 73–112 (HHTD…CMST), 115–154 (THKD…ALTA), 166–205 (GNKD…KLMK), 208–247 (GHTD…CIAT), 250–289 (VHDE…IRVL), 292–334 (EEKA…NFRA), and 358–397 (KGGA…KVED). Lys-214 is subject to N6-acetyllysine. The residue at position 578 (Lys-578) is an N6-acetyllysine. Residues 607–628 (LDNESQTTSSSNNEKPGEQEKE) form a disordered region. Low complexity predominate over residues 609–620 (NESQTTSSSNNE). A Phosphothreonine modification is found at Thr-613.

This sequence belongs to the WD repeat WDR48 family. As to quaternary structure, interacts with USP46. Interacts with USP1. Interacts with USP12. Component of the USP12-WDR20-WDR48 deubiquitinating complex. Component of the USP12-DMWD-WDR48 deubiquitinating complex. Interacts with PHLPP1. Interacts with RAD51AP1; the interaction is direct and promotes formation of a trimeric complex with RAD51 via RAD51AP1. Interacts with ATAD5; the interaction regulates USP1-mediated PCNA deubiquitination. Interacts with RAD51; the interaction is enhanced under replication stress. Interacts with ITCH; the interaction is more efficient when both USP12 and WDR48/UAF1 are involved and may facilitate recruitment of the USP12 deubiquitinating complex to Notch. (Microbial infection) Interacts with papillomavirus HPV11 E1 protein. In terms of assembly, (Microbial infection) Interacts with Saimiriine herpesvirus TIP protein. As to quaternary structure, (Microbial infection) Interacts with human cytomegalovirus protein UL138. (Microbial infection) Interacts with Epstein-Barr virus protein EBNA3. As to expression, ubiquitous.

The protein resides in the nucleus. Its subcellular location is the cytoplasm. The protein localises to the lysosome. It localises to the late endosome. Its function is as follows. Regulator of deubiquitinating complexes, which acts as a strong activator of USP1, USP12 and USP46. Enhances the USP1-mediated deubiquitination of FANCD2; USP1 being almost inactive by itself. Activates deubiquitination by increasing the catalytic turnover without increasing the affinity of deubiquitinating enzymes for the substrate. Also activates deubiquitinating activity of complexes containing USP12. In complex with USP12, acts as a potential tumor suppressor by positively regulating PHLPP1 stability. Docks at the distal end of the USP12 fingers domain and induces a cascade of structural changes leading to the activation of the enzyme. Together with RAD51AP1, promotes DNA repair by stimulating RAD51-mediated homologous recombination. Binds single-stranded DNA (ssDNA) and double-stranded DNA (dsDNA). DNA-binding is required both for USP1-mediated deubiquitination of FANCD2 and stimulation of RAD51-mediated homologous recombination: both WDR48/UAF1 and RAD51AP1 have coordinated role in DNA-binding during these processes. Together with ATAD5 and by regulating USP1 activity, has a role in PCNA-mediated translesion synthesis (TLS) by deubiquitinating monoubiquitinated PCNA. Together with ATAD5, has a role in recruiting RAD51 to stalled forks during replication stress. In terms of biological role, (Microbial infection) In case of infection by Herpesvirus saimiri, may play a role in vesicular transport or membrane fusion events necessary for transport to lysosomes. Induces lysosomal vesicle formation via interaction with Herpesvirus saimiri tyrosine kinase-interacting protein (TIP). Subsequently, TIP recruits tyrosine-protein kinase LCK, resulting in down-regulation of T-cell antigen receptor TCR. May play a role in generation of enlarged endosomal vesicles via interaction with TIP. In case of infection by papillomavirus HPV11, promotes the maintenance of the viral genome via its interaction with HPV11 helicase E1. This chain is WD repeat-containing protein 48, found in Homo sapiens (Human).